The sequence spans 352 residues: Divinyl chlorophyll a/b light-harvesting protein PcbH (352 aa).

Transmembrane regions (helical) follow at residues 27–47, 88–108, 140–160, 202–222, 242–262, and 309–329; these read FIGS…ASCL, VATI…AGLA, FILG…VEWA, VMSG…FHIA, AVLS…AFWA, and LVNV…WHAL.

This sequence belongs to the PsbB/PsbC family. IsiA/Pcb subfamily. The antenna complex consists of divinyl chlorophylls (a and b) and divinyl chlorophyll a/b binding proteins and binds more divinyl chlorophyll b than does the antenna complex from high-light-adapted Prochlorococcus. Divinyl chlorophyll a serves as cofactor. Requires divinyl chlorophyll b as cofactor.

The protein localises to the cellular thylakoid membrane. Its function is as follows. The antenna complex functions as a light receptor, it captures and delivers excitation energy to photosystems II and I. The Prochlorales pcb genes are not related to higher plant LHCs. The sequence is that of Divinyl chlorophyll a/b light-harvesting protein PcbH (pcbH) from Prochlorococcus marinus (strain SARG / CCMP1375 / SS120).